The sequence spans 923 residues: Immunomodulating metalloprotease (923 aa).

The first 41 residues, 1-41 (MSLSTTAFPSLQGENMSRSPIPRHRALLAGFCLAGALSAQA), serve as a signal peptide directing secretion. The 345-residue stretch at 450–794 (QGFTAIGRMA…FYTQWVHYWA (345 aa)) folds into the Peptidase M60 domain. Zn(2+) is bound at residue histidine 696. Glutamate 697 is an active-site residue. Histidine 700 lines the Zn(2+) pocket.

It belongs to the peptidase M88 family. Zn(2+) serves as cofactor.

The protein resides in the secreted. With respect to regulation, proteolytic activity is blocked in the presence of EDTA. In terms of biological role, protease that degrades several proteins of the host immune system. Cleaves P-selectin glycoprotein ligand-1 (PSGL-1), leading to its functional inhibition; PSGL-1 is a leukocyte cell-surface receptor essential for leukocyte recruitment to the site of infection. Next to PSGL-1, targets host CD43 and CD44 that are also involved in leukocyte homing. Thus, prevents neutrophil extravasation and thereby protects P.aeruginosa from neutrophil attack. Is also able to inhibit the decay accelerating factor (CD55), but not the cell-surface receptors CD46 and CD31. The protein is Immunomodulating metalloprotease of Pseudomonas aeruginosa (strain ATCC 15692 / DSM 22644 / CIP 104116 / JCM 14847 / LMG 12228 / 1C / PRS 101 / PAO1).